We begin with the raw amino-acid sequence, 173 residues long: Crossover junction endodeoxyribonuclease RuvC (173 aa).

Active-site residues include Asp8, Glu67, and Asp139. Residues Asp8, Glu67, and Asp139 each contribute to the Mg(2+) site.

Belongs to the RuvC family. Homodimer which binds Holliday junction (HJ) DNA. The HJ becomes 2-fold symmetrical on binding to RuvC with unstacked arms; it has a different conformation from HJ DNA in complex with RuvA. In the full resolvosome a probable DNA-RuvA(4)-RuvB(12)-RuvC(2) complex forms which resolves the HJ. Mg(2+) is required as a cofactor.

Its subcellular location is the cytoplasm. It catalyses the reaction Endonucleolytic cleavage at a junction such as a reciprocal single-stranded crossover between two homologous DNA duplexes (Holliday junction).. Functionally, the RuvA-RuvB-RuvC complex processes Holliday junction (HJ) DNA during genetic recombination and DNA repair. Endonuclease that resolves HJ intermediates. Cleaves cruciform DNA by making single-stranded nicks across the HJ at symmetrical positions within the homologous arms, yielding a 5'-phosphate and a 3'-hydroxyl group; requires a central core of homology in the junction. The consensus cleavage sequence is 5'-(A/T)TT(C/G)-3'. Cleavage occurs on the 3'-side of the TT dinucleotide at the point of strand exchange. HJ branch migration catalyzed by RuvA-RuvB allows RuvC to scan DNA until it finds its consensus sequence, where it cleaves and resolves the cruciform DNA. The polypeptide is Crossover junction endodeoxyribonuclease RuvC (Shewanella sp. (strain ANA-3)).